The chain runs to 33 residues: Photosystem II reaction center protein Psb30 (33 aa).

A helical transmembrane segment spans residues 5 to 25 (LITQLASLILIVASGPIVIGL).

The protein belongs to the Psb30/Ycf12 family. In terms of assembly, PSII is composed of 1 copy each of membrane proteins PsbA, PsbB, PsbC, PsbD, PsbE, PsbF, PsbH, PsbI, PsbJ, PsbK, PsbL, PsbM, PsbT, PsbX, PsbY, PsbZ, Psb30/Ycf12, peripheral proteins of the oxygen-evolving complex and a large number of cofactors. It forms dimeric complexes.

The protein localises to the plastid. It localises to the chloroplast thylakoid membrane. Functionally, a core subunit of photosystem II (PSII), probably helps stabilize the reaction center. This chain is Photosystem II reaction center protein Psb30, found in Lepocinclis buetschlii.